Here is a 115-residue protein sequence, read N- to C-terminus: Large ribosomal subunit protein uL22 (115 aa).

Belongs to the universal ribosomal protein uL22 family. Part of the 50S ribosomal subunit.

Its function is as follows. This protein binds specifically to 23S rRNA; its binding is stimulated by other ribosomal proteins, e.g. L4, L17, and L20. It is important during the early stages of 50S assembly. It makes multiple contacts with different domains of the 23S rRNA in the assembled 50S subunit and ribosome. In terms of biological role, the globular domain of the protein is located near the polypeptide exit tunnel on the outside of the subunit, while an extended beta-hairpin is found that lines the wall of the exit tunnel in the center of the 70S ribosome. The sequence is that of Large ribosomal subunit protein uL22 from Limosilactobacillus fermentum (strain NBRC 3956 / LMG 18251) (Lactobacillus fermentum).